The primary structure comprises 253 residues: Major prion protein (253 aa).

The N-terminal stretch at 1 to 22 (MANLGCWMLVLFVATWSDLGLC) is a signal peptide. Positions 23 to 230 (KKRPKPGGWN…ESQAYYQRGS (208 aa)) are interaction with GRB2, ERI3 and SYN1. Positions 26–108 (PKPGGWNTGG…WNKPSKPKTN (83 aa)) are disordered. A run of 5 repeats spans residues 51–59 (PQGGGGWGQ), 60–67 (PHGGGWGQ), 68–75 (PHGGGWGQ), 76–83 (PHGGGWGQ), and 84–91 (PHGGGWGQ). Residues 51–91 (PQGGGGWGQPHGGGWGQPHGGGWGQPHGGGWGQPHGGGWGQ) are 5 X 8 AA tandem repeats of P-H-G-G-G-W-G-Q. The segment covering 52 to 95 (QGGGGWGQPHGGGWGQPHGGGWGQPHGGGWGQPHGGGWGQGGGT) has biased composition (gly residues). Cu(2+) is bound by residues His-61, Gly-62, Gly-63, His-69, Gly-70, Gly-71, His-77, Gly-78, Gly-79, His-85, Gly-86, and Gly-87. Residues Cys-179 and Cys-214 are joined by a disulfide bond. N-linked (GlcNAc...) asparagine glycosylation is found at Asn-181 and Asn-197. The GPI-anchor amidated serine moiety is linked to residue Ser-230. Residues 231-253 (SMVLFSSPPVILLISFLIFLIVG) constitute a propeptide, removed in mature form.

It belongs to the prion family. Monomer and homodimer. Has a tendency to aggregate into amyloid fibrils containing a cross-beta spine, formed by a steric zipper of superposed beta-strands. Soluble oligomers may represent an intermediate stage on the path to fibril formation. Copper binding may promote oligomerization. Interacts with GRB2, APP, ERI3/PRNPIP and SYN1. Mislocalized cytosolically exposed PrP interacts with MGRN1; this interaction alters MGRN1 subcellular location and causes lysosomal enlargement. Interacts with KIAA1191.

The protein resides in the cell membrane. It localises to the golgi apparatus. Its primary physiological function is unclear. Has cytoprotective activity against internal or environmental stresses. May play a role in neuronal development and synaptic plasticity. May be required for neuronal myelin sheath maintenance. May play a role in iron uptake and iron homeostasis. Soluble oligomers are toxic to cultured neuroblastoma cells and induce apoptosis (in vitro). Association with GPC1 (via its heparan sulfate chains) targets PRNP to lipid rafts. Also provides Cu(2+) or Zn(2+) for the ascorbate-mediated GPC1 deaminase degradation of its heparan sulfate side chains. This chain is Major prion protein (PRNP), found in Hylobates lar (Lar gibbon).